Consider the following 72-residue polypeptide: Translation initiation factor IF-1 (72 aa).

The S1-like domain maps to 1–72 (MAKEDTLEFP…TKGRINYRFK (72 aa)).

This sequence belongs to the IF-1 family. In terms of assembly, component of the 30S ribosomal translation pre-initiation complex which assembles on the 30S ribosome in the order IF-2 and IF-3, IF-1 and N-formylmethionyl-tRNA(fMet); mRNA recruitment can occur at any time during PIC assembly.

It is found in the cytoplasm. Functionally, one of the essential components for the initiation of protein synthesis. Stabilizes the binding of IF-2 and IF-3 on the 30S subunit to which N-formylmethionyl-tRNA(fMet) subsequently binds. Helps modulate mRNA selection, yielding the 30S pre-initiation complex (PIC). Upon addition of the 50S ribosomal subunit IF-1, IF-2 and IF-3 are released leaving the mature 70S translation initiation complex. This is Translation initiation factor IF-1 from Ruegeria sp. (strain TM1040) (Silicibacter sp.).